Reading from the N-terminus, the 241-residue chain is U2 small nuclear ribonucleoprotein B'' (241 aa).

Positions 12-91 (QTLYVNNLYE…RPMKIQYCKS (80 aa)) constitute an RRM 1 domain. A compositionally biased stretch (basic and acidic residues) spans 99–126 (LDGTYMEKKREREENDKKGSNKKQDRKS). Positions 99–169 (LDGTYMEKKR…PRDDPPNKTL (71 aa)) are disordered. Low complexity predominate over residues 129–152 (QQQQQQKRPGAPTSTTSTTSPTTS). The RRM 2 domain occupies 167–241 (KTLFVENLPD…KPMVVSFAAQ (75 aa)).

The protein belongs to the RRM U1 A/B'' family. As to quaternary structure, identified in the spliceosome B complex. Identified in the spliceosome C complex.

It is found in the nucleus. Functionally, involved in pre-mRNA splicing as component of the spliceosome. Associated with sn-RNP U2, where it contributes to the binding of stem loop IV of U2 snRNA. In Dictyostelium discoideum (Social amoeba), this protein is U2 small nuclear ribonucleoprotein B'' (snrpb2).